The primary structure comprises 475 residues: MAKLHITTWGCQMNEYDSSKMADLLNSTHGLELTDKPEEADVLLLNTCSIREKAQEKVFSQLGRWKNWKKDKPDLIIGVGGCVASQEGEHIRDRAPFVDIVFGPQTLHRLPEMINKIRGGDRAIVDISFPEIEKFDRLPEPRAEGPTAFVSIMEGCNKYCSFCVVPYTRGEEVSRPVDDVLFEIAQLAEQGVREVNLLGQNVNAYRGETFDGGICTFAELLRLVAAIDGIDRVRYTTSHPIEFTDDIIEVYRDTPELVSFLHLPIQSGADRVLTMMKRNHTALEYKAIIRKLREVRPNIQISSDFIVGFPGETAEDFEQTMKVIEQVNFDMSFSFIYSARPGTPAADLPDDISEEEKKARLARLQQRINHQAMQFSRAMLGTEQRVLVEGPSKKDIMELTGRTENNRIVNFQGTPDMIGKFVDIKITDVYTNSLRGEVVRTEDEMGLRVVESAASVIARTRKEDDLGVGKYVVNL.

Positions 2–119 (AKLHITTWGC…LPEMINKIRG (118 aa)) constitute an MTTase N-terminal domain. Positions 11, 48, 82, 156, 160, and 163 each coordinate [4Fe-4S] cluster. The Radical SAM core domain occupies 142–374 (RAEGPTAFVS…QQRINHQAMQ (233 aa)). The 64-residue stretch at 377–440 (RAMLGTEQRV…TNSLRGEVVR (64 aa)) folds into the TRAM domain.

It belongs to the methylthiotransferase family. MiaB subfamily. Monomer. It depends on [4Fe-4S] cluster as a cofactor.

Its subcellular location is the cytoplasm. The catalysed reaction is N(6)-dimethylallyladenosine(37) in tRNA + (sulfur carrier)-SH + AH2 + 2 S-adenosyl-L-methionine = 2-methylsulfanyl-N(6)-dimethylallyladenosine(37) in tRNA + (sulfur carrier)-H + 5'-deoxyadenosine + L-methionine + A + S-adenosyl-L-homocysteine + 2 H(+). In terms of biological role, catalyzes the methylthiolation of N6-(dimethylallyl)adenosine (i(6)A), leading to the formation of 2-methylthio-N6-(dimethylallyl)adenosine (ms(2)i(6)A) at position 37 in tRNAs that read codons beginning with uridine. This is tRNA-2-methylthio-N(6)-dimethylallyladenosine synthase from Actinobacillus pleuropneumoniae serotype 3 (strain JL03).